A 303-amino-acid polypeptide reads, in one-letter code: Proline dehydrogenase 2 (303 aa).

Lysine 96 serves as a coordination point for substrate. Aspartate 130 is a catalytic residue. 2 residues coordinate FAD: methionine 131 and glutamine 159. Arginine 180 is a catalytic residue. FAD is bound by residues 183–185 and 222–223; these read KGA and TH. 284–285 contributes to the substrate binding site; sequence RR.

Belongs to the proline dehydrogenase family. Requires FAD as cofactor.

The catalysed reaction is L-proline + a quinone = (S)-1-pyrroline-5-carboxylate + a quinol + H(+). It functions in the pathway amino-acid degradation; L-proline degradation into L-glutamate; L-glutamate from L-proline: step 1/2. Functionally, converts proline to delta-1-pyrroline-5-carboxylate. Important for the use of proline as a sole carbon and energy source or a sole nitrogen source. The polypeptide is Proline dehydrogenase 2 (Bacillus subtilis (strain 168)).